We begin with the raw amino-acid sequence, 748 residues long: Long-chain-alcohol oxidase FAO4B (748 aa).

Residues 1–18 (MEDVRRRNRGHPLLRSKK) show a composition bias toward basic residues. The disordered stretch occupies residues 1–25 (MEDVRRRNRGHPLLRSKKRGEGYNH). The next 2 membrane-spanning stretches (helical) occupy residues 89-109 (IILMILSFRFGTLLLCGSLCL) and 140-160 (FLLPFRITFFLAKFYTLFYFF). FAD is bound at residue 238-253 (CDAVVVGSGSGGGVAA). Histidine 679 acts as the Proton acceptor in catalysis.

This sequence belongs to the GMC oxidoreductase family.

It is found in the membrane. It carries out the reaction a long-chain primary fatty alcohol + O2 = a long-chain fatty aldehyde + H2O2. Long-chain fatty alcohol oxidase involved in the omega-oxidation pathway of lipid degradation. This Arabidopsis thaliana (Mouse-ear cress) protein is Long-chain-alcohol oxidase FAO4B (FAO4B).